Here is a 328-residue protein sequence, read N- to C-terminus: Ferredoxin--NADP reductase (328 aa).

7 residues coordinate FAD: Glu34, Gln42, Tyr47, Val87, Phe120, Asp283, and Thr323.

The protein belongs to the ferredoxin--NADP reductase type 2 family. In terms of assembly, homodimer. The cofactor is FAD.

The enzyme catalyses 2 reduced [2Fe-2S]-[ferredoxin] + NADP(+) + H(+) = 2 oxidized [2Fe-2S]-[ferredoxin] + NADPH. This is Ferredoxin--NADP reductase from Pediococcus pentosaceus (strain ATCC 25745 / CCUG 21536 / LMG 10740 / 183-1w).